The sequence spans 503 residues: Maturase K (503 aa).

The protein belongs to the intron maturase 2 family. MatK subfamily.

The protein resides in the plastid. It localises to the chloroplast. Functionally, usually encoded in the trnK tRNA gene intron. Probably assists in splicing its own and other chloroplast group II introns. This chain is Maturase K, found in Rosa rugosa (Rugosa rose).